The primary structure comprises 180 residues: Adenine phosphoribosyltransferase (180 aa).

This sequence belongs to the purine/pyrimidine phosphoribosyltransferase family. In terms of assembly, homodimer.

It localises to the cytoplasm. It carries out the reaction AMP + diphosphate = 5-phospho-alpha-D-ribose 1-diphosphate + adenine. The protein operates within purine metabolism; AMP biosynthesis via salvage pathway; AMP from adenine: step 1/1. In terms of biological role, catalyzes a salvage reaction resulting in the formation of AMP, that is energically less costly than de novo synthesis. The protein is Adenine phosphoribosyltransferase of Pasteurella multocida (strain Pm70).